We begin with the raw amino-acid sequence, 172 residues long: Large ribosomal subunit protein uL10 (172 aa).

The protein belongs to the universal ribosomal protein uL10 family. As to quaternary structure, part of the ribosomal stalk of the 50S ribosomal subunit. The N-terminus interacts with L11 and the large rRNA to form the base of the stalk. The C-terminus forms an elongated spine to which L12 dimers bind in a sequential fashion forming a multimeric L10(L12)X complex.

In terms of biological role, forms part of the ribosomal stalk, playing a central role in the interaction of the ribosome with GTP-bound translation factors. The sequence is that of Large ribosomal subunit protein uL10 from Rhodospirillum rubrum (strain ATCC 11170 / ATH 1.1.1 / DSM 467 / LMG 4362 / NCIMB 8255 / S1).